The following is a 258-amino-acid chain: Acidic leucine-rich nuclear phosphoprotein 32 family member E (258 aa).

Met1 is modified (N-acetylmethionine). 4 LRR repeats span residues 18 to 38, 43 to 64, 65 to 87, and 89 to 110; these read EVTE…EGLN, ELEF…PSLN, KLRK…AEKC, and NLTY…EALQ. Lys68 participates in a covalent cross-link: Glycyl lysine isopeptide (Lys-Gly) (interchain with G-Cter in SUMO2). The LRRCT domain occupies 123–161; sequence CEITNLEDYRESIFELLQQITYLDGFDQEDNEAPDSEEE. Composition is skewed to acidic residues over residues 149 to 206 and 216 to 238; these read DQED…EEEV and IQDE…EEEE. Residues 149 to 258 are disordered; sequence DQEDNEAPDS…AEDDGEEDDD (110 aa). A ZID domain region spans residues 205–258; it reads EVGLSYLMKEEIQDEEDDDDYVDEGEEEEEEEEEGPRGEKRKRDAEDDGEEDDD. A compositionally biased stretch (basic and acidic residues) spans 239–249; the sequence is GPRGEKRKRDA.

This sequence belongs to the ANP32 family. In terms of assembly, component of a SWR1-like complex, composed of EP400, KAT5/TIP60, TRRAP, BRD8, RUVBL1, RUVBL2, ING3 and ANP32E; the complex does not contain SRCAP. Interacts with H2A.Z/H2AZ1. Interacts with the importin alpha KPNA1 and KPNA2. Phosphorylated. The phosphorylation is nuclear localization signal (NLS)-dependent.

The protein resides in the cytoplasm. The protein localises to the nucleus. Functionally, histone chaperone that specifically mediates the genome-wide removal of histone H2A.Z/H2AZ1 from the nucleosome: removes H2A.Z/H2AZ1 from its normal sites of deposition, especially from enhancer and insulator regions. Not involved in deposition of H2A.Z/H2AZ1 in the nucleosome. May stabilize the evicted H2A.Z/H2AZ1-H2B dimer, thus shifting the equilibrium towards dissociation and the off-chromatin state. Inhibits activity of protein phosphatase 2A (PP2A). Does not inhibit protein phosphatase 1. May play a role in cerebellar development and synaptogenesis. The polypeptide is Acidic leucine-rich nuclear phosphoprotein 32 family member E (Anp32e) (Rattus norvegicus (Rat)).